A 350-amino-acid polypeptide reads, in one-letter code: tRNA uridine(34) hydroxylase (350 aa).

The Rhodanese domain maps to 146–240; it reads DDPDAVFIDM…YARRARAQGL (95 aa). The active-site Cysteine persulfide intermediate is Cys-200. The segment covering 319 to 328 has biased composition (basic and acidic residues); it reads RRRRAGRENG. The interval 319 to 350 is disordered; the sequence is RRRRAGRENGNKIFNKSRGRLNSKLSIPDPAE.

This sequence belongs to the TrhO family.

The enzyme catalyses uridine(34) in tRNA + AH2 + O2 = 5-hydroxyuridine(34) in tRNA + A + H2O. Functionally, catalyzes oxygen-dependent 5-hydroxyuridine (ho5U) modification at position 34 in tRNAs. This chain is tRNA uridine(34) hydroxylase, found in Salmonella typhimurium (strain LT2 / SGSC1412 / ATCC 700720).